Here is a 497-residue protein sequence, read N- to C-terminus: Vacuolar-processing enzyme beta-isozyme 1 (497 aa).

The first 23 residues, 1–23, serve as a signal peptide directing secretion; it reads MAARCWVWGFVVALLAVAAAADG. N-linked (GlcNAc...) asparagine glycosylation occurs at Asn-153. Residue His-180 is part of the active site. Cys-222 serves as the catalytic Nucleophile. The cysteines at positions 255 and 269 are disulfide-linked. Residue Asn-340 is glycosylated (N-linked (GlcNAc...) asparagine). 2 disulfide bridges follow: Cys-432–Cys-462 and Cys-444–Cys-479.

It belongs to the peptidase C13 family. Post-translationally, auto-catalytic activation.

The protein resides in the protein storage vacuole. It catalyses the reaction Hydrolysis of proteins and small molecule substrates at -Asn-|-Xaa- bonds.. Asparagine-specific endopeptidase that may be involved in processing of proteins targeted to vacuoles. Cysteine protease required for post-translational proteolysis of seed storage proteins in the protein storage vacuole (PSV) of developing seeds, by processing of proglutelin precursor to mature glutelin subunits, thus contributing to the formation of protein crystalline structures in PSV. The sequence is that of Vacuolar-processing enzyme beta-isozyme 1 from Oryza sativa subsp. indica (Rice).